A 484-amino-acid polypeptide reads, in one-letter code: Probable glycine dehydrogenase (decarboxylating) subunit 2 (484 aa).

At lysine 264 the chain carries N6-(pyridoxal phosphate)lysine.

The protein belongs to the GcvP family. C-terminal subunit subfamily. As to quaternary structure, the glycine cleavage system is composed of four proteins: P, T, L and H. In this organism, the P 'protein' is a heterodimer of two subunits. It depends on pyridoxal 5'-phosphate as a cofactor.

It catalyses the reaction N(6)-[(R)-lipoyl]-L-lysyl-[glycine-cleavage complex H protein] + glycine + H(+) = N(6)-[(R)-S(8)-aminomethyldihydrolipoyl]-L-lysyl-[glycine-cleavage complex H protein] + CO2. The glycine cleavage system catalyzes the degradation of glycine. The P protein binds the alpha-amino group of glycine through its pyridoxal phosphate cofactor; CO(2) is released and the remaining methylamine moiety is then transferred to the lipoamide cofactor of the H protein. The protein is Probable glycine dehydrogenase (decarboxylating) subunit 2 of Legionella pneumophila (strain Corby).